Here is a 148-residue protein sequence, read N- to C-terminus: Snaclec B4 (148 aa).

A signal peptide spans 1-24; it reads MGRIIFVSFGLLVVFLSLSGTGAA. Intrachain disulfides connect C27/C38, C55/C144, and C121/C136. The C-type lectin domain maps to 34–145; the sequence is YDQHCYKVFD…CRLLGHFVCK (112 aa).

The protein belongs to the snaclec family. As to quaternary structure, heterodimer; disulfide-linked. As to expression, expressed by the venom gland.

The protein localises to the secreted. In terms of biological role, interferes with one step of hemostasis (modulation of platelet aggregation, or coagulation cascade, for example). The chain is Snaclec B4 from Macrovipera lebetinus (Levantine viper).